The sequence spans 338 residues: Glyceraldehyde-3-phosphate dehydrogenase, cytosolic (338 aa).

NAD(+) is bound by residues 13–14 (RI), Asp-35, and Arg-82. Residues 153-155 (SCT), Thr-184, 213-214 (TG), and Arg-236 contribute to the D-glyceraldehyde 3-phosphate site. The active-site Nucleophile is the Cys-154. Asn-318 serves as a coordination point for NAD(+).

The protein belongs to the glyceraldehyde-3-phosphate dehydrogenase family. Homotetramer.

The protein localises to the cytoplasm. The catalysed reaction is D-glyceraldehyde 3-phosphate + phosphate + NAD(+) = (2R)-3-phospho-glyceroyl phosphate + NADH + H(+). The protein operates within carbohydrate degradation; glycolysis; pyruvate from D-glyceraldehyde 3-phosphate: step 1/5. In terms of biological role, key enzyme in glycolysis that catalyzes the first step of the pathway by converting D-glyceraldehyde 3-phosphate (G3P) into 3-phospho-D-glyceroyl phosphate. Essential for the maintenance of cellular ATP levels and carbohydrate metabolism. This chain is Glyceraldehyde-3-phosphate dehydrogenase, cytosolic (GAPC), found in Dianthus caryophyllus (Carnation).